The primary structure comprises 121 residues: MPKKRSSPNRNVQIADQIQRDLSELLREVKDPRIGLVTIQSVELTPDYAHAKVYFTTLTGDPQQTLEALTHAAGHLHNQLFKRLHIHTVPTLHFHYDKTIERAVEMSRLIDEANANRAKED.

The protein belongs to the RbfA family. In terms of assembly, monomer. Binds 30S ribosomal subunits, but not 50S ribosomal subunits or 70S ribosomes.

It is found in the cytoplasm. Functionally, one of several proteins that assist in the late maturation steps of the functional core of the 30S ribosomal subunit. Associates with free 30S ribosomal subunits (but not with 30S subunits that are part of 70S ribosomes or polysomes). Required for efficient processing of 16S rRNA. May interact with the 5'-terminal helix region of 16S rRNA. This is Ribosome-binding factor A from Paraburkholderia xenovorans (strain LB400).